Consider the following 370-residue polypeptide: Trans-enoyl reductase xenG (370 aa).

The interval 1 to 32 (MASTGLPQLPPSQKAVIQSEKTPGAFEVSENR) is disordered. NADP(+) is bound by residues 54 to 57 (CDWK), 177 to 180 (STAS), 200 to 203 (SPKN), Tyr218, 265 to 266 (FE), and 356 to 357 (VS).

The protein belongs to the zinc-containing alcohol dehydrogenase family. Monomer.

It participates in mycotoxin biosynthesis. Trans-enoyl reductase; part of the gene cluster that mediates the biosynthesis of xenoacremones such as xenoacremone A, a compound that shows inhibitory activity toward the PI3K/AKT signaling pathway and which has the ability to induce apoptosis of A549 lung cancer cells. Within the pathway, cooperation of the hybrid PKS-NRPS xenE and the trans-acting enoyl reductase xenG is responsible for the formation of the reduced tyrosine-nonaketide derivative. The alpha/beta hydrolase xenA then accelerates intramolecular nucleophilic attack to give a pyrrolidone derivative. Subsequently, three enzymes, xenF, xenD, and xenC, coordinately participate in the conversion to xenoacremone B. XenF catalyzes sigmatropic rearrangement to form an A-ring, which leads to an unusual intermediate with a hexane ring, which is required for the formation of the tricarbocyclic product. Epoxidation catalyzed by xenD and the formation of the paracyclophane ether catalyzed by xenC initiate a spontaneous intramolecular Diels-Alder (IMDA) reaction to yield xenoacremone B. Spontaneous hydration of xenoacremone B leads to the formation of xenoacremone A, which undergoes subsequent methylation to afford xenoacremone C. In Xenoacremonium sinensis (Endophyte fungus), this protein is Trans-enoyl reductase xenG.